The primary structure comprises 52 residues: uncharacterized protein (52 aa).

The next 2 helical transmembrane spans lie at Ile-4–Glu-24 and Met-25–Val-45.

Its subcellular location is the cell membrane. This is an uncharacterized protein from Bacillus subtilis (strain 168).